The chain runs to 424 residues: Dihydroorotase (424 aa).

Positions 60 and 62 each coordinate Zn(2+). Substrate is bound by residues 62–64 (HFR) and Asn-94. Zn(2+) is bound by residues Asp-151, His-178, and His-231. Asn-277 contacts substrate. Asp-304 lines the Zn(2+) pocket. Residue Asp-304 is part of the active site. Residue His-308 coordinates substrate.

Belongs to the metallo-dependent hydrolases superfamily. DHOase family. Class I DHOase subfamily. Zn(2+) serves as cofactor.

It catalyses the reaction (S)-dihydroorotate + H2O = N-carbamoyl-L-aspartate + H(+). The protein operates within pyrimidine metabolism; UMP biosynthesis via de novo pathway; (S)-dihydroorotate from bicarbonate: step 3/3. In terms of biological role, catalyzes the reversible cyclization of carbamoyl aspartate to dihydroorotate. The chain is Dihydroorotase from Clostridium acetobutylicum (strain ATCC 824 / DSM 792 / JCM 1419 / IAM 19013 / LMG 5710 / NBRC 13948 / NRRL B-527 / VKM B-1787 / 2291 / W).